Consider the following 554-residue polypeptide: 3-(3-hydroxy-phenyl)propionate/3-hydroxycinnamic acid hydroxylase (554 aa).

FAD-binding positions include Q17–K46 and F285–D295.

Belongs to the PheA/TfdB FAD monooxygenase family. FAD is required as a cofactor.

The enzyme catalyses 3-(3-hydroxyphenyl)propanoate + NADH + O2 + H(+) = 3-(2,3-dihydroxyphenyl)propanoate + NAD(+) + H2O. It catalyses the reaction (2E)-3-(3-hydroxyphenyl)prop-2-enoate + NADH + O2 + H(+) = (2E)-3-(2,3-dihydroxyphenyl)prop-2-enoate + NAD(+) + H2O. It participates in aromatic compound metabolism; 3-phenylpropanoate degradation. Catalyzes the insertion of one atom of molecular oxygen into position 2 of the phenyl ring of 3-(3-hydroxyphenyl)propionate (3-HPP) and hydroxycinnamic acid (3HCI). The protein is 3-(3-hydroxy-phenyl)propionate/3-hydroxycinnamic acid hydroxylase of Klebsiella pneumoniae subsp. pneumoniae (strain ATCC 700721 / MGH 78578).